Here is a 424-residue protein sequence, read N- to C-terminus: Serine--tRNA ligase (424 aa).

Residue 231–233 (TAE) coordinates L-serine. Residue 261-263 (RSE) participates in ATP binding. Glu284 serves as a coordination point for L-serine. Residue 348 to 351 (ETSS) coordinates ATP. An L-serine-binding site is contributed by Ser383.

Belongs to the class-II aminoacyl-tRNA synthetase family. Type-1 seryl-tRNA synthetase subfamily. As to quaternary structure, homodimer. The tRNA molecule binds across the dimer.

The protein localises to the cytoplasm. The enzyme catalyses tRNA(Ser) + L-serine + ATP = L-seryl-tRNA(Ser) + AMP + diphosphate + H(+). The catalysed reaction is tRNA(Sec) + L-serine + ATP = L-seryl-tRNA(Sec) + AMP + diphosphate + H(+). It participates in aminoacyl-tRNA biosynthesis; selenocysteinyl-tRNA(Sec) biosynthesis; L-seryl-tRNA(Sec) from L-serine and tRNA(Sec): step 1/1. In terms of biological role, catalyzes the attachment of serine to tRNA(Ser). Is also able to aminoacylate tRNA(Sec) with serine, to form the misacylated tRNA L-seryl-tRNA(Sec), which will be further converted into selenocysteinyl-tRNA(Sec). The protein is Serine--tRNA ligase of Metamycoplasma arthritidis (strain 158L3-1) (Mycoplasma arthritidis).